The sequence spans 347 residues: Dual specificity mitogen-activated protein kinase kinase mek-1 (347 aa).

The interval 1 to 42 (MERDFDLGMGRPGGLGGLGGEPIMQQMPQPAPHHPSRSSNDH) is disordered. The segment covering 10–20 (GRPGGLGGLGG) has biased composition (gly residues). The Protein kinase domain maps to 72-325 (LQFVEDIGHG…YDMLLQHPFV (254 aa)). ATP-binding positions include 78 to 86 (IGHGSCGTV) and K99. D193 acts as the Proton acceptor in catalysis. Residues S221 and S225 each carry the phosphoserine modification.

Belongs to the protein kinase superfamily. STE Ser/Thr protein kinase family. MAP kinase kinase subfamily. As to quaternary structure, interacts with shc-1; the interaction is independent of mek-1 catalytic activity, is constitutive and may facilitate mlk-1-mediated phosphorylation by bringing mlk-1 and mek-1 together. The cofactor is Mg(2+). In terms of processing, may be phosphorylated at Ser-221 and/or Ser-225 by mlk-1. As to expression, expressed in pharyngeal muscles, uterine endothelial cells, intestine and in neurons of ring ganglia, ventral ganglion and ganglia around anus. Expressed also in hypodermis and body muscles.

The enzyme catalyses L-seryl-[protein] + ATP = O-phospho-L-seryl-[protein] + ADP + H(+). The catalysed reaction is L-threonyl-[protein] + ATP = O-phospho-L-threonyl-[protein] + ADP + H(+). It carries out the reaction L-tyrosyl-[protein] + ATP = O-phospho-L-tyrosyl-[protein] + ADP + H(+). Its activity is regulated as follows. May be activated by phosphorylation at Ser-221 and Ser-225. Functionally, dual specificity protein kinase which may phosphorylate kgb-1 and thereby is an essential component of the JNK pathway composed of mlk-1, mek-1 and kgb-1. May also have a synergistic role with sek-1 in phosphorylating pmk-1. Involved in the response to environmental stress including heavy metal ions (Cu(2+) and Cd(2+)), oxidative stress and starvation. In association with sek-1, regulates germline cell apoptosis in response to oxidative, osmotic and heat shock stresses. Involved in resistance to pathogenic bacteria infection. Involved in axon regeneration after injury. The chain is Dual specificity mitogen-activated protein kinase kinase mek-1 from Caenorhabditis elegans.